Here is a 666-residue protein sequence, read N- to C-terminus: Probable potassium transport system protein Kup (666 aa).

12 consecutive transmembrane segments (helical) span residues 53–73, 89–109, 144–164, 181–201, 212–232, 247–267, 291–311, 324–344, 381–401, 411–431, 441–461, and 463–483; these read FWAL…TSPL, VTPV…FIVV, LLLL…SMIT, PEFG…LFAV, AFAP…ALHI, AIHF…LVFL, WFCL…ALIL, LAPA…TVIA, IYLP…VLLF, YGIA…VVVW, AAAL…ANLL, and LLDG…LIWT.

It belongs to the HAK/KUP transporter (TC 2.A.72) family.

It is found in the cell inner membrane. The enzyme catalyses K(+)(in) + H(+)(in) = K(+)(out) + H(+)(out). Its function is as follows. Transport of potassium into the cell. Likely operates as a K(+):H(+) symporter. The sequence is that of Probable potassium transport system protein Kup from Nitrobacter hamburgensis (strain DSM 10229 / NCIMB 13809 / X14).